Here is an 823-residue protein sequence, read N- to C-terminus: Dimethyl sulfoxide/trimethylamine N-oxide reductase (823 aa).

A signal peptide (tat-type signal) is located at residues 1 to 42 (MTKFSGNELRAELYRRAFLSYSVAPGALGMFGRSLLAKGARA). Residues 156–160 (YGWKS), Trp-158, Ser-189, 232–233 (KT), 262–263 (ID), 283–285 (QTD), 364–365 (WS), Arg-368, Asn-476, His-480, 500–501 (HD), Arg-523, Asp-553, 685–686 (HP), 691–693 (HSQ), Asn-779, and 796–797 (GQ) contribute to the Mo-bis(molybdopterin guanine dinucleotide) site.

In terms of assembly, homodimer. The cofactor is Mo-bis(molybdopterin guanine dinucleotide). In terms of processing, predicted to be exported by the Tat system. The position of the signal peptide cleavage has been experimentally proven.

It is found in the periplasm. It catalyses the reaction dimethyl sulfide + a menaquinone + H2O = dimethyl sulfoxide + a menaquinol. It carries out the reaction trimethylamine + 2 Fe(III)-[cytochrome c] + H2O = trimethylamine N-oxide + 2 Fe(II)-[cytochrome c] + 3 H(+). Its function is as follows. Catalyzes the reduction of dimethyl sulfoxide (DMSO) and trimethylamine N-oxide (TMAO) to dimethyl sulfide (DMS) and trimethylamine, respectively. The terminal DMSO reductase can also use various sulfoxides and N-oxide compounds as terminal electron acceptor in addition to DMSO and TMAO. This Rhodobacter capsulatus (Rhodopseudomonas capsulata) protein is Dimethyl sulfoxide/trimethylamine N-oxide reductase (dorA).